Consider the following 545-residue polypeptide: CTP synthase (545 aa).

An amidoligase domain region spans residues 1–266 (MTTNYIFVTG…DDLVCARFGI (266 aa)). S14 serves as a coordination point for CTP. Position 14 (S14) interacts with UTP. Residues 15–20 (SLGKGI) and D72 each bind ATP. D72 and E140 together coordinate Mg(2+). CTP is bound by residues 147 to 149 (DIE), 187 to 192 (KTKPTQ), and K223. UTP contacts are provided by residues 187 to 192 (KTKPTQ) and K223. 239–241 (KDV) serves as a coordination point for ATP. Residues 291–542 (TIGMVGKYIE…IKAAGENARG (252 aa)) form the Glutamine amidotransferase type-1 domain. G352 lines the L-glutamine pocket. C379 serves as the catalytic Nucleophile; for glutamine hydrolysis. L-glutamine is bound by residues 380-383 (LGMQ), E403, and R470. Residues H515 and E517 contribute to the active site.

It belongs to the CTP synthase family. In terms of assembly, homotetramer.

The enzyme catalyses UTP + L-glutamine + ATP + H2O = CTP + L-glutamate + ADP + phosphate + 2 H(+). It catalyses the reaction L-glutamine + H2O = L-glutamate + NH4(+). The catalysed reaction is UTP + NH4(+) + ATP = CTP + ADP + phosphate + 2 H(+). The protein operates within pyrimidine metabolism; CTP biosynthesis via de novo pathway; CTP from UDP: step 2/2. Its activity is regulated as follows. Allosterically activated by GTP, when glutamine is the substrate; GTP has no effect on the reaction when ammonia is the substrate. The allosteric effector GTP functions by stabilizing the protein conformation that binds the tetrahedral intermediate(s) formed during glutamine hydrolysis. Inhibited by the product CTP, via allosteric rather than competitive inhibition. Its function is as follows. Catalyzes the ATP-dependent amination of UTP to CTP with either L-glutamine or ammonia as the source of nitrogen. Regulates intracellular CTP levels through interactions with the four ribonucleotide triphosphates. The sequence is that of CTP synthase from Vibrio vulnificus (strain CMCP6).